Reading from the N-terminus, the 125-residue chain is Large ribosomal subunit protein eL31 (125 aa).

The residue at position 1 (Met1) is an N-acetylmethionine. Ser15 carries the post-translational modification Phosphoserine. Residues Lys55 and Lys70 each carry the N6-succinyllysine modification. N6-acetyllysine; alternate is present on Lys75. Lys75 is modified (N6-succinyllysine; alternate). At Ser98 the chain carries Phosphoserine.

It belongs to the eukaryotic ribosomal protein eL31 family. In terms of assembly, component of the large ribosomal subunit.

It is found in the cytoplasm. Functionally, component of the large ribosomal subunit. The ribosome is a large ribonucleoprotein complex responsible for the synthesis of proteins in the cell. The sequence is that of Large ribosomal subunit protein eL31 (RPL31) from Oryctolagus cuniculus (Rabbit).